A 569-amino-acid chain; its full sequence is AsmA family protein YicH (569 aa).

The Cytoplasmic portion of the chain corresponds to 1–6 (MKFIGK). A helical transmembrane segment spans residues 7–27 (LLLYILIALLVAIAGLYFLLQ). Over 28–569 (TRWGAEHISA…GEVTSTEPVR (542 aa)) the chain is Periplasmic.

The protein belongs to the AsmA family.

The protein resides in the cell inner membrane. This is AsmA family protein YicH (yicH) from Escherichia coli (strain K12).